A 519-amino-acid chain; its full sequence is AAA-ATPase At4g30250 (519 aa).

Residues 1-24 form the signal peptide; sequence MSDYWTTMASLLGMLAFCQTIVQL. 252-259 is a binding site for ATP; sequence GPPGTGKS. Disordered stretches follow at residues 315–335 and 467–519; these read GKNK…NGSG and KSVG…EKEK. The span at 479 to 488 shows a compositional bias: acidic residues; it reads QEEEEEAEEE. A compositionally biased stretch (basic and acidic residues) spans 489-508; it reads QEKRALDSPNRRNREVCGFR. Residues 509 to 519 are compositionally biased toward acidic residues; that stretch reads EEEEEEDEKEK.

The protein belongs to the AAA ATPase family. BCS1 subfamily. It depends on Mg(2+) as a cofactor.

The catalysed reaction is ATP + H2O = ADP + phosphate + H(+). In Arabidopsis thaliana (Mouse-ear cress), this protein is AAA-ATPase At4g30250.